The sequence spans 232 residues: Ribose-5-phosphate isomerase A (232 aa).

Residues 29–32, 84–87, and 97–100 contribute to the substrate site; these read TGST, DGAD, and KGGG. The active-site Proton acceptor is the Glu-106. Lys-124 is a substrate binding site.

Belongs to the ribose 5-phosphate isomerase family. In terms of assembly, homodimer.

The catalysed reaction is aldehydo-D-ribose 5-phosphate = D-ribulose 5-phosphate. It participates in carbohydrate degradation; pentose phosphate pathway; D-ribose 5-phosphate from D-ribulose 5-phosphate (non-oxidative stage): step 1/1. In terms of biological role, catalyzes the reversible conversion of ribose-5-phosphate to ribulose 5-phosphate. The chain is Ribose-5-phosphate isomerase A from Brucella suis biovar 1 (strain 1330).